A 317-amino-acid polypeptide reads, in one-letter code: Putative AP2/ERF and B3 domain-containing protein Os01g0140700 (317 aa).

Positions Met-1 to Ala-37 are disordered. The segment covering Gln-27–Ala-37 has biased composition (acidic residues). A DNA-binding region (AP2/ERF) is located at residues Arg-66–Ala-121. Residues Phe-178–Lys-287 constitute a DNA-binding region (TF-B3).

It localises to the nucleus. In Oryza sativa subsp. japonica (Rice), this protein is Putative AP2/ERF and B3 domain-containing protein Os01g0140700.